Consider the following 436-residue polypeptide: C4-dicarboxylate transport protein 2 (436 aa).

Helical transmembrane passes span 14 to 34 (VLVAIAIGIALGHWYPETAVA), 45 to 65 (LIKMAIAPIIFCTVVTGIAGM), 77 to 97 (MALLYFEVVSTVALIIGLVVV), 142 to 162 (VVGAFANGDILQVLFFSVLFG), 198 to 218 (PIGAFGAMAFTIGAYGVGSLV), 223 to 243 (LMLCFYITCILFVLIVLGGIA), 290 to 310 (VVGLVIPTGYSFNLDGTSIYL), 331 to 351 (ITLLLVLLIASKGAAGVTGSG), and 353 to 373 (IVLAATLSAVGHLPVAGLALI). Positions 414 to 436 (ELAGEGNASSPASDIPVGGREAV) are disordered.

This sequence belongs to the dicarboxylate/amino acid:cation symporter (DAACS) (TC 2.A.23) family.

Its subcellular location is the cell inner membrane. In terms of biological role, responsible for the transport of dicarboxylates such as succinate, fumarate, and malate from the periplasm across the membrane. The polypeptide is C4-dicarboxylate transport protein 2 (Pseudomonas aeruginosa (strain UCBPP-PA14)).